We begin with the raw amino-acid sequence, 338 residues long: Taste receptor type 2 member 39 (338 aa).

Over 1 to 30 (MLGRCFPPNTKEKQQLRMIKLCDPAESELS) the chain is Extracellular. Residues 31–51 (PFLITLTLAVLLAEYLTGIIA) traverse the membrane as a helical segment. At 52–74 (NGFITAIHAAEWVQNKSVSTSGR) the chain is on the cytoplasmic side. Residues 75 to 95 (ILVFLSVSRIALQSLMMLEIT) form a helical membrane-spanning segment. The Extracellular portion of the chain corresponds to 96-116 (ISSTSLSFYSEDAVYYAFKIS). A helical membrane pass occupies residues 117–137 (FIFLNFCSLWFAAWLSFFYFV). Over 138–156 (KIANFSYPLFLKLRWRISG) the chain is Cytoplasmic. The helical transmembrane segment at 157 to 177 (LIPWLLWLSVFISFSHSMFCI) threads the bilayer. Residues 178–205 (NICTGYCDNSFPIHSSNSTEKTYFSEIS) lie on the Extracellular side of the membrane. Residue asparagine 194 is glycosylated (N-linked (GlcNAc...) asparagine). A helical transmembrane segment spans residues 206-226 (VVSLAFFFNLGIVIPLIMFIL). At 227 to 262 (AAILLILSLKRHTLHMGSNATGSKDPSMEAHIGAIK) the chain is on the cytoplasmic side. Residues 263–283 (ATSYFLILYIFNAVALFIYLS) traverse the membrane as a helical segment. The Extracellular segment spans residues 284 to 291 (NMFDINSL). Residues 292–312 (WNTLCQIIMAAYPASHSILLI) form a helical membrane-spanning segment. Residues 313–338 (KDNPGLRRAWKQLQHRLHLYPKQWTL) lie on the Cytoplasmic side of the membrane.

It belongs to the G-protein coupled receptor T2R family.

The protein resides in the membrane. Its function is as follows. Receptor that may play a role in the perception of bitterness and is gustducin-linked. May play a role in sensing the chemical composition of the gastrointestinal content. The activity of this receptor may stimulate alpha gustducin, mediate PLC-beta-2 activation and lead to the gating of TRPM5. The sequence is that of Taste receptor type 2 member 39 (TAS2R39) from Macaca mulatta (Rhesus macaque).